A 110-amino-acid polypeptide reads, in one-letter code: Auxin-responsive protein SAUR71 (110 aa).

It belongs to the ARG7 family. Highly expressed in the steles of roots and hypocotyls.

The protein resides in the cytoplasm. Functionally, plays a role in the regulation of cell expansion, root meristem patterning and auxin transport. This Arabidopsis thaliana (Mouse-ear cress) protein is Auxin-responsive protein SAUR71.